A 547-amino-acid polypeptide reads, in one-letter code: Chaperonin GroEL 1 (547 aa).

Residues 30–33, Lys51, 87–91, Gly415, and Asp496 contribute to the ATP site; these read TLGP and DGTTT. Residues 525–547 form a disordered region; the sequence is KPEPKSPAGGPGMGGMGGMDGMM. A compositionally biased stretch (gly residues) spans 533 to 547; sequence GGPGMGGMGGMDGMM.

This sequence belongs to the chaperonin (HSP60) family. Forms a cylinder of 14 subunits composed of two heptameric rings stacked back-to-back. Interacts with the co-chaperonin GroES.

Its subcellular location is the cytoplasm. It catalyses the reaction ATP + H2O + a folded polypeptide = ADP + phosphate + an unfolded polypeptide.. Its function is as follows. Together with its co-chaperonin GroES, plays an essential role in assisting protein folding. The GroEL-GroES system forms a nano-cage that allows encapsulation of the non-native substrate proteins and provides a physical environment optimized to promote and accelerate protein folding. The chain is Chaperonin GroEL 1 from Cereibacter sphaeroides (strain ATCC 17023 / DSM 158 / JCM 6121 / CCUG 31486 / LMG 2827 / NBRC 12203 / NCIMB 8253 / ATH 2.4.1.) (Rhodobacter sphaeroides).